The sequence spans 147 residues: Transthyretin (147 aa).

The N-terminal stretch at 1–20 (MASHRLLLLCLAGLVFVSEA) is a signal peptide. Cys30 is modified (sulfocysteine). Lys35 provides a ligand contact to L-thyroxine. 4-carboxyglutamate is present on Glu62. Ser72 carries the phosphoserine modification. An L-thyroxine-binding site is contributed by Glu74. N-linked (GlcNAc...) asparagine glycosylation is present at Asn118. Ser137 is a binding site for L-thyroxine.

This sequence belongs to the transthyretin family. In terms of assembly, homotetramer. Dimer of dimers. In the homotetramer, subunits assemble around a central channel that can accommodate two ligand molecules. Interacts with RBP4. Sulfonation of the reactive cysteine Cys-30 enhances the stability of the native conformation of TTR, avoiding misassembly of the protein leading to amyloid formation. Detected in brain.

It localises to the secreted. Its function is as follows. Thyroid hormone-binding protein. Probably transports thyroxine from the bloodstream to the brain. This chain is Transthyretin (TTR), found in Pan troglodytes (Chimpanzee).